We begin with the raw amino-acid sequence, 198 residues long: tRNA(Phe) 7-((3-amino-3-carboxypropyl)-4-demethylwyosine(37)-N(4))-methyltransferase 1 (198 aa).

It belongs to the TYW3 family.

The enzyme catalyses 4-demethyl-7-[(3S)-3-amino-3-carboxypropyl]wyosine(37) in tRNA(Phe) + S-adenosyl-L-methionine = 7-[(3S)-3-amino-3-carboxypropyl]wyosine(37) in tRNA(Phe) + S-adenosyl-L-homocysteine + H(+). S-adenosyl-L-methionine-dependent methyltransferase that acts as a component of the wyosine derivatives biosynthesis pathway. Probably methylates N-4 position of wybutosine-86 to produce wybutosine-72. This chain is tRNA(Phe) 7-((3-amino-3-carboxypropyl)-4-demethylwyosine(37)-N(4))-methyltransferase 1, found in Thermococcus kodakarensis (strain ATCC BAA-918 / JCM 12380 / KOD1) (Pyrococcus kodakaraensis (strain KOD1)).